Reading from the N-terminus, the 1013-residue chain is Putative helicase mov-10-B.1 (1013 aa).

Composition is skewed to polar residues over residues 91 to 103 and 113 to 123; these read QWSRPYRSQQNHA and RPSTTRVSDPS. The interval 91–129 is disordered; that stretch reads QWSRPYRSQQNHATPHLNDAISRPSTTRVSDPSSVPEPE. 550–557 contributes to the ATP binding site; the sequence is GPPGTGKT. The short motif at 672–675 is the DEAG box element; it reads DEAG.

It belongs to the DNA2/NAM7 helicase family. SDE3 subfamily.

The protein resides in the cytoplasm. It is found in the P-body. The enzyme catalyses ATP + H2O = ADP + phosphate + H(+). Its function is as follows. Probable RNA helicase. Required for RNA-mediated gene silencing by the RNA-induced silencing complex (RISC). Required for both miRNA-mediated translational repression and miRNA-mediated cleavage of complementary mRNAs by RISC. The polypeptide is Putative helicase mov-10-B.1 (mov10b.1) (Danio rerio (Zebrafish)).